The chain runs to 178 residues: MAELITIARPYAEAAFEVAKEEGKLVEWSEQLANLSAIVSDETMTAYMVNPSVTSEDVLKLLVDVMDSNLNSEVKNLLNVMAENKRLDALSEVAEVFEELKATEDKRVRATVISARKATVEQKKKLSAALNAKFDAEVEITYEEDPSLISGIKIKVGDWAIDGSALSQLNKLGAAIAQ.

Belongs to the ATPase delta chain family. As to quaternary structure, F-type ATPases have 2 components, F(1) - the catalytic core - and F(0) - the membrane proton channel. F(1) has five subunits: alpha(3), beta(3), gamma(1), delta(1), epsilon(1). F(0) has three main subunits: a(1), b(2) and c(10-14). The alpha and beta chains form an alternating ring which encloses part of the gamma chain. F(1) is attached to F(0) by a central stalk formed by the gamma and epsilon chains, while a peripheral stalk is formed by the delta and b chains.

The protein localises to the cell inner membrane. Its function is as follows. F(1)F(0) ATP synthase produces ATP from ADP in the presence of a proton or sodium gradient. F-type ATPases consist of two structural domains, F(1) containing the extramembraneous catalytic core and F(0) containing the membrane proton channel, linked together by a central stalk and a peripheral stalk. During catalysis, ATP synthesis in the catalytic domain of F(1) is coupled via a rotary mechanism of the central stalk subunits to proton translocation. In terms of biological role, this protein is part of the stalk that links CF(0) to CF(1). It either transmits conformational changes from CF(0) to CF(1) or is implicated in proton conduction. The protein is ATP synthase subunit delta of Hydrogenovibrio crunogenus (strain DSM 25203 / XCL-2) (Thiomicrospira crunogena).